A 565-amino-acid chain; its full sequence is uncharacterized protein (565 aa).

5 consecutive transmembrane segments (helical) span residues 4 to 26 (FVQFLGSNPYILLFLTIGLAVWV), 33 to 55 (GYGLGAVAAAIVVGCLVATVGAA), 68 to 90 (SLLYYLFMYGVGLRVGPSFVNAL), 97 to 119 (YAILAIIAPILGLAIVVLGTQFF), and 162 to 184 (ISAMIALSYGITYIWGTVGIILL). 2 consecutive RCK C-terminal domains span residues 210 to 295 (PNVD…LGPE) and 296 to 379 (VPDA…IFGV). The next 5 helical transmembrane spans lie at 389–411 (LLTLSFGMILGFLIGLIEVPAFG), 415–432 (GLGNAGGLLLSGIIVSSI), 453–472 (LGLIGFVAIVGINAGADLLT), 482–504 (IFIVGFLASTIPPIIVWAIGFHI), and 539–561 (WLGFPVGYAVSGVLLTVFGYFAM).

This sequence belongs to the AAE transporter (TC 2.A.81) family.

It localises to the cell membrane. This is an uncharacterized protein from Bordetella bronchiseptica (strain ATCC BAA-588 / NCTC 13252 / RB50) (Alcaligenes bronchisepticus).